Reading from the N-terminus, the 121-residue chain is ATP synthase epsilon chain (121 aa).

It belongs to the ATPase epsilon chain family. As to quaternary structure, F-type ATPases have 2 components, CF(1) - the catalytic core - and CF(0) - the membrane proton channel. CF(1) has five subunits: alpha(3), beta(3), gamma(1), delta(1), epsilon(1). CF(0) has three main subunits: a, b and c.

It localises to the cell membrane. Produces ATP from ADP in the presence of a proton gradient across the membrane. This Mycobacterium bovis (strain ATCC BAA-935 / AF2122/97) protein is ATP synthase epsilon chain (atpC).